Here is a 337-residue protein sequence, read N- to C-terminus: GTPase Obg (337 aa).

Positions 1 to 159 (MDFIDEVKLY…RNIVLKLKVL (159 aa)) constitute an Obg domain. The OBG-type G domain maps to 160–329 (SDVGIIGMPN…LNEKVKTKEI (170 aa)). GTP is bound by residues 166 to 173 (GMPNVGKS), 191 to 195 (FTTIR), 212 to 215 (DIPG), 279 to 282 (NKCD), and 310 to 312 (DDD). Mg(2+)-binding residues include S173 and T193.

The protein belongs to the TRAFAC class OBG-HflX-like GTPase superfamily. OBG GTPase family. As to quaternary structure, monomer. Mg(2+) is required as a cofactor.

It localises to the cytoplasm. Functionally, an essential GTPase which binds GTP, GDP and possibly (p)ppGpp with moderate affinity, with high nucleotide exchange rates and a fairly low GTP hydrolysis rate. Plays a role in control of the cell cycle, stress response, ribosome biogenesis and in those bacteria that undergo differentiation, in morphogenesis control. The sequence is that of GTPase Obg from Wolbachia pipientis subsp. Culex pipiens (strain wPip).